We begin with the raw amino-acid sequence, 268 residues long: MLSDIIRAVILGVVEGVTEFLPVSSTGHLLLVGRFFNLGEGDFWKTFDVLIQLGAILAILALYFAKLWRIALGMFSDPAAQRFIIGVLVAFLPAAVIGAAAGSYIKLFLFNPWVVCFSLIVGGAVLLWVDQLDLKPRHHDATTFPVLMYFYIGCAQCVAMIPGVSRSGASIVAAMLFGADKRAAAEFSFFLAIPTMVGAFVYDLYKSRADLTTDHMTIVAVGFVVSFITAIIVVKTFLGYVTRHGFQLFAWWRVVVGTLGLIALAMGR.

8 consecutive transmembrane segments (helical) span residues Val9–Leu29, Phe47–Leu67, Phe83–Ser103, Leu107–Leu127, Phe144–Val164, Ala184–Leu204, Ile218–Leu238, and Phe246–Met266.

The protein belongs to the UppP family.

The protein localises to the cell inner membrane. It catalyses the reaction di-trans,octa-cis-undecaprenyl diphosphate + H2O = di-trans,octa-cis-undecaprenyl phosphate + phosphate + H(+). Its function is as follows. Catalyzes the dephosphorylation of undecaprenyl diphosphate (UPP). Confers resistance to bacitracin. The chain is Undecaprenyl-diphosphatase from Rhodopseudomonas palustris (strain HaA2).